A 346-amino-acid polypeptide reads, in one-letter code: MTKGKLLTTPSRLLKLVLPLSTVDHNTDRKDVAPLALLVHPQQPLSYLERLIQAELPPPDPQDSKSTTRSVTFRAMEAKDDEIKPRKKADTEGGGGSDGSVQSYSGAGREGEGKDEGEFVRWSPSTEIGDFIRDAARAKEFEVEIEGSPGVIKVAVPSFNDRTYYLRQRLRRTSRKISKLAAIKEECDKAAHRGAQRIALAGCGGLIGYWYIVYRLTFETDLGWDVMEPVTYLVGLSTLIGGYMWFLWHNREVSYRSALNITVSARQNKLYQAKGFSLQDWEGYLEEANAMRREIKAVASEYDVDWNETQDEGGDEKVTKALRDERKNNNGTKNKSKEGEEDDEDD.

The Mitochondrial matrix segment spans residues 1–195 (MTKGKLLTTP…ECDKAAHRGA (195 aa)). The disordered stretch occupies residues 55–120 (ELPPPDPQDS…GEGKDEGEFV (66 aa)). 2 stretches are compositionally biased toward basic and acidic residues: residues 76 to 91 (MEAKDDEIKPRKKADT) and 109 to 119 (REGEGKDEGEF). The chain crosses the membrane as a helical span at residues 196 to 216 (QRIALAGCGGLIGYWYIVYRL). Residues 217–226 (TFETDLGWDV) lie on the Mitochondrial intermembrane side of the membrane. The short motif at 224 to 232 (WDVMEPVTY) is the Selectivity filter element. Residues 227-248 (MEPVTYLVGLSTLIGGYMWFLW) traverse the membrane as a helical segment. E228 contributes to the Ca(2+) binding site. The Mitochondrial matrix segment spans residues 249–346 (HNREVSYRSA…KEGEEDDEDD (98 aa)). The interval 306–346 (WNETQDEGGDEKVTKALRDERKNNNGTKNKSKEGEEDDEDD) is disordered. Residues 315 to 328 (DEKVTKALRDERKN) show a composition bias toward basic and acidic residues.

The protein belongs to the MCU (TC 1.A.77) family. As to quaternary structure, homotetramer, assembles in a dimer or dimers configuration with two interfaces.

Its subcellular location is the mitochondrion inner membrane. The catalysed reaction is Ca(2+)(in) = Ca(2+)(out). Highly selective calcium channel localized to the inner mitochondrial membrane, which mediates calcium uptake into the mitochondrial matrix. Mitochondrial calcium homeostasis plays key roles in cellular physiology and regulates ATP production, cytoplasmic calcium signals and activation of cell death pathways. Sufficient to operate as a pore-forming channel without the need of calcium-sensor or auxiliary subunit. This Cyphellophora europaea (strain CBS 101466) (Phialophora europaea) protein is Calcium uniporter protein, mitochondrial.